The following is a 325-amino-acid chain: Post-GPI attachment to proteins factor 2-like (325 aa).

Transmembrane regions (helical) follow at residues V80–F100, Y130–Y150, L171–T191, I205–G225, W243–A263, and W276–I296.

It belongs to the PGAP2 family.

Its subcellular location is the membrane. In Drosophila melanogaster (Fruit fly), this protein is Post-GPI attachment to proteins factor 2-like.